Consider the following 121-residue polypeptide: Protein SNORC (121 aa).

A signal peptide spans 1 to 24; it reads MASCLALRMALLLVSGVLAPAVLT. The Extracellular portion of the chain corresponds to 25-92; that stretch reads DDVPQEPVPT…QGGGSLGPGA (68 aa). The interval 28-84 is disordered; the sequence is PQEPVPTLWNEPAELPSGEGPVESTSPGREPVDTGPPAPTVAPGPEDSTAQERLDQG. A helical membrane pass occupies residues 93 to 113; that stretch reads IAAIVIAALLATCVVLALVVV. Over 114–121 the chain is Cytoplasmic; the sequence is ALRKFSAS.

As to quaternary structure, interacts (via the extracellular domain) with FGF2. Expressed in cartilage.

The protein localises to the membrane. It is found in the cytoplasm. The protein resides in the secreted. It localises to the extracellular space. Its subcellular location is the extracellular matrix. Plays a role in the regulation of chondrocyte maturation and postnatal endochondral ossification. May inhibit cell growth stimulation induced by FGF2. This is Protein SNORC from Homo sapiens (Human).